We begin with the raw amino-acid sequence, 277 residues long: Phosphoribosylaminoimidazole-succinocarboxamide synthase (277 aa).

The protein belongs to the SAICAR synthetase family.

The catalysed reaction is 5-amino-1-(5-phospho-D-ribosyl)imidazole-4-carboxylate + L-aspartate + ATP = (2S)-2-[5-amino-1-(5-phospho-beta-D-ribosyl)imidazole-4-carboxamido]succinate + ADP + phosphate + 2 H(+). It functions in the pathway purine metabolism; IMP biosynthesis via de novo pathway; 5-amino-1-(5-phospho-D-ribosyl)imidazole-4-carboxamide from 5-amino-1-(5-phospho-D-ribosyl)imidazole-4-carboxylate: step 1/2. The sequence is that of Phosphoribosylaminoimidazole-succinocarboxamide synthase from Salinispora arenicola (strain CNS-205).